Consider the following 955-residue polypeptide: Protein translocase subunit SecA (955 aa).

ATP is bound by residues Gln90, 108–112 (GEGKT), and Asp509. Positions 537 to 571 (EGHRPPVPLQRSGAEGGGGFAAKAAPASGPHGHAP) are disordered. Low complexity predominate over residues 557–571 (AAKAAPASGPHGHAP).

Belongs to the SecA family. Monomer and homodimer. Part of the essential Sec protein translocation apparatus which comprises SecA, SecYEG and auxiliary proteins SecDF. Other proteins may also be involved.

The protein localises to the cell inner membrane. Its subcellular location is the cellular thylakoid membrane. The protein resides in the cytoplasm. The enzyme catalyses ATP + H2O + cellular proteinSide 1 = ADP + phosphate + cellular proteinSide 2.. Its function is as follows. Part of the Sec protein translocase complex. Interacts with the SecYEG preprotein conducting channel. Has a central role in coupling the hydrolysis of ATP to the transfer of proteins into and across the cell membrane, serving as an ATP-driven molecular motor driving the stepwise translocation of polypeptide chains across the membrane. Probably participates in protein translocation into and across both the cytoplasmic and thylakoid membranes in cyanobacterial cells. This chain is Protein translocase subunit SecA, found in Synechococcus sp. (strain WH7803).